Reading from the N-terminus, the 146-residue chain is Regulator of ribonuclease activity B (146 aa).

The tract at residues 110 to 146 is disordered; it reads WGTYFEDPDGEEEEGDEFDQDDEDGPADRDEVPATRH. A compositionally biased stretch (acidic residues) spans 115–134; the sequence is EDPDGEEEEGDEFDQDDEDG. Basic and acidic residues predominate over residues 135–146; it reads PADRDEVPATRH.

The protein belongs to the RraB family. In terms of assembly, interacts with the C-terminal region of Rne.

The protein localises to the cytoplasm. Globally modulates RNA abundance by binding to RNase E (Rne) and regulating its endonucleolytic activity. Can modulate Rne action in a substrate-dependent manner by altering the composition of the degradosome. In Sodalis glossinidius (strain morsitans), this protein is Regulator of ribonuclease activity B.